Consider the following 150-residue polypeptide: Ribonuclease pancreatic delta-type (150 aa).

The first 25 residues, 1-25, serve as a signal peptide directing secretion; that stretch reads MGLEKSLILFSLLVLVLGWVQPSLG. Arginine 35 is a binding site for substrate. The active-site Proton acceptor is the histidine 37. Disulfide bonds link cysteine 51/cysteine 110, cysteine 65/cysteine 121, cysteine 83/cysteine 136, and cysteine 90/cysteine 98. Residues 66–70, lysine 91, and arginine 111 contribute to the substrate site; that span reads KRVNT. Histidine 145 (proton donor) is an active-site residue.

It belongs to the pancreatic ribonuclease family. In terms of assembly, monomer.

Its subcellular location is the secreted. It carries out the reaction an [RNA] containing cytidine + H2O = an [RNA]-3'-cytidine-3'-phosphate + a 5'-hydroxy-ribonucleotide-3'-[RNA].. The catalysed reaction is an [RNA] containing uridine + H2O = an [RNA]-3'-uridine-3'-phosphate + a 5'-hydroxy-ribonucleotide-3'-[RNA].. Its function is as follows. Endonuclease that catalyzes the cleavage of RNA on the 3' side of pyrimidine nucleotides. Acts on single-stranded and double-stranded RNA. This chain is Ribonuclease pancreatic delta-type, found in Rattus exulans (Polynesian rat).